The sequence spans 458 residues: Pentatricopeptide repeat-containing protein At1g77405 (458 aa).

PPR repeat units follow at residues 164 to 198 (TTASITCLMKCLGEEGFVKEALATFYRMKEYHCKP), 199 to 233 (DVYAYNTIINALCRVGNFKKARFLLDQMQLPGFRY), 236 to 271 (DTYTYTILISSYCRYGMQTGCRKAIRRRMWEANRMF), 282 to 316 (DVVTYNCLIDGCCKTNRIGRALELFEDMKTKGCVP), 317 to 351 (NQVTYNSFIRYYSVTNEIEGAIEMMRTMKKLGHGV), 353 to 387 (GSSTYTPLIHALVETRRAAEARDLVVEMVEAGLVP), and 388 to 419 (REYTYKLVCDALSSEGLASTLDEELHKRMREG).

This sequence belongs to the PPR family. P subfamily.

The polypeptide is Pentatricopeptide repeat-containing protein At1g77405 (Arabidopsis thaliana (Mouse-ear cress)).